Consider the following 564-residue polypeptide: Probable pectinesterase/pectinesterase inhibitor 46 (564 aa).

A helical transmembrane segment spans residues 25 to 45; it reads IAIIAISSIVLVCIVVGAVVG. The interval 62–207 is pectinesterase inhibitor 46; it reads EPISVSVKAL…TEMTSNALAI (146 aa). N-linked (GlcNAc...) asparagine glycosylation is found at Asn90, Asn126, Asn147, and Asn196. A pectinesterase 46 region spans residues 257-550; the sequence is TIVVAKDGSG…FTVKPFIDGN (294 aa). The substrate site is built by Thr332 and Gln362. The active-site Proton donor; for pectinesterase activity is the Asp385. Residues Cys399 and Cys419 are joined by a disulfide bond. Asp406 acts as the Nucleophile; for pectinesterase activity in catalysis. N-linked (GlcNAc...) asparagine glycosylation is found at Asn452 and Asn460. Residues Arg470 and Trp472 each coordinate substrate.

It in the N-terminal section; belongs to the PMEI family. In the C-terminal section; belongs to the pectinesterase family.

It is found in the membrane. The catalysed reaction is [(1-&gt;4)-alpha-D-galacturonosyl methyl ester](n) + n H2O = [(1-&gt;4)-alpha-D-galacturonosyl](n) + n methanol + n H(+). It participates in glycan metabolism; pectin degradation; 2-dehydro-3-deoxy-D-gluconate from pectin: step 1/5. In terms of biological role, acts in the modification of cell walls via demethylesterification of cell wall pectin. The polypeptide is Probable pectinesterase/pectinesterase inhibitor 46 (PME46) (Arabidopsis thaliana (Mouse-ear cress)).